The primary structure comprises 195 residues: Orotate phosphoribosyltransferase (195 aa).

117–125 (EDITTTGGS) is a binding site for 5-phospho-alpha-D-ribose 1-diphosphate. Orotate contacts are provided by Thr121 and Arg149.

This sequence belongs to the purine/pyrimidine phosphoribosyltransferase family. PyrE subfamily. In terms of assembly, homodimer. The cofactor is Mg(2+).

The enzyme catalyses orotidine 5'-phosphate + diphosphate = orotate + 5-phospho-alpha-D-ribose 1-diphosphate. It participates in pyrimidine metabolism; UMP biosynthesis via de novo pathway; UMP from orotate: step 1/2. In terms of biological role, catalyzes the transfer of a ribosyl phosphate group from 5-phosphoribose 1-diphosphate to orotate, leading to the formation of orotidine monophosphate (OMP). The protein is Orotate phosphoribosyltransferase of Acidithiobacillus ferrooxidans (strain ATCC 53993 / BNL-5-31) (Leptospirillum ferrooxidans (ATCC 53993)).